A 512-amino-acid chain; its full sequence is GMP synthase [glutamine-hydrolyzing] (512 aa).

Residues 9 to 198 enclose the Glutamine amidotransferase type-1 domain; that stretch reads GVLVVDFGGQ…WLSLVGAPRT (190 aa). The Nucleophile role is filled by C87. Active-site residues include H173 and E175. The GMPS ATP-PPase domain occupies 199–387; that stretch reads WRPGDMVSEL…LGVPRELIWK (189 aa). 226–232 provides a ligand contact to ATP; sequence SGGVDST.

The catalysed reaction is XMP + L-glutamine + ATP + H2O = GMP + L-glutamate + AMP + diphosphate + 2 H(+). Its pathway is purine metabolism; GMP biosynthesis; GMP from XMP (L-Gln route): step 1/1. Catalyzes the synthesis of GMP from XMP. The sequence is that of GMP synthase [glutamine-hydrolyzing] (guaA) from Aeropyrum pernix (strain ATCC 700893 / DSM 11879 / JCM 9820 / NBRC 100138 / K1).